Reading from the N-terminus, the 160-residue chain is Transcriptional repressor NrdR (160 aa).

Over residues 1 to 11 (MRCPSCNSLDT) the composition is skewed to polar residues. A disordered region spans residues 1–20 (MRCPSCNSLDTQVKDSRPTE). The segment at 3 to 34 (CPSCNSLDTQVKDSRPTEDSAVIRRRRVCMAC) is a zinc-finger region. The ATP-cone domain maps to 49–139 (LTVIKRNGRR…VYRNFREAKD (91 aa)).

It belongs to the NrdR family. Zn(2+) is required as a cofactor.

Functionally, negatively regulates transcription of bacterial ribonucleotide reductase nrd genes and operons by binding to NrdR-boxes. The polypeptide is Transcriptional repressor NrdR (Nitrobacter hamburgensis (strain DSM 10229 / NCIMB 13809 / X14)).